Here is a 585-residue protein sequence, read N- to C-terminus: Proline--tRNA ligase (585 aa).

It belongs to the class-II aminoacyl-tRNA synthetase family. ProS type 1 subfamily. In terms of assembly, homodimer.

The protein resides in the cytoplasm. The catalysed reaction is tRNA(Pro) + L-proline + ATP = L-prolyl-tRNA(Pro) + AMP + diphosphate. Functionally, catalyzes the attachment of proline to tRNA(Pro) in a two-step reaction: proline is first activated by ATP to form Pro-AMP and then transferred to the acceptor end of tRNA(Pro). As ProRS can inadvertently accommodate and process non-cognate amino acids such as alanine and cysteine, to avoid such errors it has two additional distinct editing activities against alanine. One activity is designated as 'pretransfer' editing and involves the tRNA(Pro)-independent hydrolysis of activated Ala-AMP. The other activity is designated 'posttransfer' editing and involves deacylation of mischarged Ala-tRNA(Pro). The misacylated Cys-tRNA(Pro) is not edited by ProRS. This chain is Proline--tRNA ligase, found in Cutibacterium acnes (strain DSM 16379 / KPA171202) (Propionibacterium acnes).